Reading from the N-terminus, the 464-residue chain is Argininosuccinate lyase (464 aa).

Belongs to the lyase 1 family. Argininosuccinate lyase subfamily.

Its subcellular location is the cytoplasm. It catalyses the reaction 2-(N(omega)-L-arginino)succinate = fumarate + L-arginine. Its pathway is amino-acid biosynthesis; L-arginine biosynthesis; L-arginine from L-ornithine and carbamoyl phosphate: step 3/3. This Pseudomonas savastanoi pv. phaseolicola (strain 1448A / Race 6) (Pseudomonas syringae pv. phaseolicola (strain 1448A / Race 6)) protein is Argininosuccinate lyase.